The following is a 300-amino-acid chain: Endonuclease III-like protein 1 (300 aa).

Residues 1–19 (MNSGVRMVTRSRSRATRIA) constitute a mitochondrion transit peptide. A disordered region spans residues 1–53 (MNSGVRMVTRSRSRATRIASEGCREELAPREAAAEGRKSHRPVRHPRRTQKTH). The segment covering 22 to 37 (GCREELAPREAAAEGR) has biased composition (basic and acidic residues). The span at 38–51 (KSHRPVRHPRRTQK) shows a compositional bias: basic residues. The HhH domain occupies 187 to 211 (RYEGDIPASVAELVALPGVGPKMAH). Residue K208 is the Nucleophile; for N-glycosylase activity of the active site. [4Fe-4S] cluster is bound by residues C278, C285, C288, and C294.

Belongs to the Nth/MutY family. As to quaternary structure, interacts with YBX1. Interacts with ERCC5/XPG; the interaction stimulates NTHL1 activity and NTHL1 binding to its DNA substrate. [4Fe-4S] cluster is required as a cofactor. Post-translationally, ubiquitinated by TRIM26; leading to proteasomal degradation. Widely expressed.

The protein localises to the nucleus. It is found in the mitochondrion. It catalyses the reaction 2'-deoxyribonucleotide-(2'-deoxyribose 5'-phosphate)-2'-deoxyribonucleotide-DNA = a 3'-end 2'-deoxyribonucleotide-(2,3-dehydro-2,3-deoxyribose 5'-phosphate)-DNA + a 5'-end 5'-phospho-2'-deoxyribonucleoside-DNA + H(+). In terms of biological role, bifunctional DNA N-glycosylase with associated apurinic/apyrimidinic (AP) lyase function that catalyzes the first step in base excision repair (BER), the primary repair pathway for the repair of oxidative DNA damage. The DNA N-glycosylase activity releases the damaged DNA base from DNA by cleaving the N-glycosidic bond, leaving an AP site. The AP lyase activity cleaves the phosphodiester bond 3' to the AP site by a beta-elimination. Primarily recognizes and repairs oxidative base damage of pyrimidines. The sequence is that of Endonuclease III-like protein 1 (Nthl1) from Mus musculus (Mouse).